The primary structure comprises 207 residues: FMN-dependent NADH:quinone oxidoreductase (207 aa).

FMN is bound by residues serine 10, serine 16–serine 18, methionine 96–leucine 99, and serine 141–glycine 144.

Belongs to the azoreductase type 1 family. As to quaternary structure, homodimer. The cofactor is FMN.

The catalysed reaction is 2 a quinone + NADH + H(+) = 2 a 1,4-benzosemiquinone + NAD(+). It carries out the reaction N,N-dimethyl-1,4-phenylenediamine + anthranilate + 2 NAD(+) = 2-(4-dimethylaminophenyl)diazenylbenzoate + 2 NADH + 2 H(+). In terms of biological role, quinone reductase that provides resistance to thiol-specific stress caused by electrophilic quinones. Also exhibits azoreductase activity. Catalyzes the reductive cleavage of the azo bond in aromatic azo compounds to the corresponding amines. In Nostoc sp. (strain PCC 7120 / SAG 25.82 / UTEX 2576), this protein is FMN-dependent NADH:quinone oxidoreductase.